Here is a 770-residue protein sequence, read N- to C-terminus: Signal transducer and activator of transcription 3 (770 aa).

Ala-2 is modified (N-acetylalanine). Residues Lys-49 and Lys-87 each carry the N6-acetyllysine modification. Residues 150 to 162 (DVRKRVQDLEQKM) carry the Essential for nuclear import motif. The SH2 domain occupies 580-670 (WNEGYIMGFI…DATNILVSPL (91 aa)). An allysine; alternate mark is found at Lys-601, Lys-615, and Lys-631. An N6-acetyllysine; alternate mark is found at Lys-601, Lys-615, and Lys-631. At Tyr-640 the chain carries Phosphotyrosine; by TYK2. The residue at position 685 (Lys-685) is an Allysine; alternate. Position 685 is an N6-acetyllysine; alternate (Lys-685). Tyr-705 is subject to Phosphotyrosine; by FER and PTK6. The residue at position 707 (Lys-707) is an N6-acetyllysine. Thr-714 is subject to Phosphothreonine. Ser-727 is modified (phosphoserine; by DYRK2, NLK, NEK6, IRAK1, RPS6KA5, ZIPK/DAPK3 and PKC/PRKCE).

It belongs to the transcription factor STAT family. Forms a homodimer or a heterodimer with a related family member (at least STAT1). Component of a promoter-binding complex composed of STAT3, NFATC3 and NFATC4; complex formation is enhanced by calcineurin. Interacts with IL31RA, NCOA1, PELP1, SIPAR, SOCS7, STATIP1 and TMF1. Interacts with IL23R in presence of IL23. Interacts (via SH2 domain) with NLK. Interacts with ARL2BP; the interaction is enhanced by LIF and JAK1 expression. Interacts with KPNA4 and KPNA5; KPNA4 may be the primary mediator of nuclear import. Interacts with CAV2; the interaction is increased on insulin-induced tyrosine phosphorylation of CAV2 and leads to STAT3 activation. Interacts with ARL2BP; interaction is enhanced with ARL2. Interacts with NEK6. Binds to CDK9 when activated and nuclear. Interacts with BMX. Interacts with ZIPK/DAPK3. Interacts with PIAS3; the interaction occurs on stimulation by IL6, CNTF or OSM and inhibits the DNA binding activity of STAT3. In prostate cancer cells, interacts with PRKCE and promotes DNA binding activity of STAT3. Interacts with STMN3, antagonizing its microtubule-destabilizing activity. Interacts with the 'Lys-129' acetylated form of BIRC5/survivin. Interacts with FER. Interacts (via SH2 domain) with EIF2AK2/PKR (via the kinase catalytic domain). Interacts with FGFR4. Interacts with INPP5F; the interaction is independent of STAT3 Tyr-705 phosphorylation status. Interacts with OCIAD1 and OCIAD2. Interacts (unphosphorylated or phosphorylated at Ser-727) with PHB1. Interacts and may form heterodimers with NHLH1. Found in a complex with SLC39A6, SLC39A10 and with the 'Ser-727' phosphorylated form of STAT3 throughout mitosis. Interacts (when acetylated) with EP300 (via bromo domain); interaction takes place following STAT3 acetylation by EP300 and promotes enhanceosome assembly. Interacts (when acetylated) with BRD2 (via bromo domain); interaction promotes STAT3 recruitment to chromatin and T-helper Th17 cell differentiation. Interacts with FAM220A/SIPAR; the interaction occurs in both the nucleus and the cytoplasm, is enhanced by IL6 and promotes STAT3 dephosphorylation. Interacts in both unphosphorylated and phosphorylated forms with FAM220A but interacts preferentially in the phosphorylated form in the nucleus. Interacts with PTPN2; the interaction is promoted by FAM220A and leads to STAT3 dephosphorylation which negatively regulates STAT3 transcriptional activator activity. Activated through tyrosine phosphorylation by BMX. Tyrosine phosphorylated in response to IL6, IL11, CNTF, LIF, KITLG/SCF, CSF1, EGF, PDGF, IFN-alpha and OSM. Activated KIT promotes phosphorylation on tyrosine residues and subsequent translocation to the nucleus. Tyrosine phosphorylated in response to constitutively activated FGFR1, FGFR2, FGFR3 and FGFR4. Phosphorylated on serine upon DNA damage, probably by ATM or ATR. Serine phosphorylation is important for the formation of stable DNA-binding STAT3 homodimers and maximal transcriptional activity. ARL2BP may participate in keeping the phosphorylated state of STAT3 within the nucleus. Tyrosine phosphorylated upon stimulation with EGF. Upon LPS challenge, phosphorylated within the nucleus by IRAK1. Phosphorylated on Ser-727 by RPS6KA5. Dephosphorylation on tyrosine residues by PTPN2 negatively regulates IL6/interleukin-6 signaling. Phosphorylation at Tyr-705 by FER, isoform M2 of PKM (PKM2) or PTK6 leads to an increase of its transcriptional activity. Phosphorylation at Tyr-705 is increased in the presence of calcineurin. Phosphorylation at Tyr-640 by TYK2 negatively regulates transcriptional activity. In terms of processing, acetylated on lysine residues by EP300/p300, promoting its activation. Acetylation at Lys-49 and Lys-87 by EP300/p300 promotes its activation. Acetylation at Lys-87 by EP300/p300 promotes its association with BRD2 and recruitment to chromatin. Deacetylated at Lys-49 and Lys-87 by HDAC1. Acetylation at Lys-685 by EP300/p300 promotes its homodimerization and activation. Deacetylated at Lys-685 by HDAC3. Acetylated on lysine residues by CREBBP. Deacetylation by LOXL3 leads to disrupt STAT3 dimerization and inhibit STAT3 transcription activity. Oxidation of lysine residues to allysine on STAT3 preferentially takes place on lysine residues that are acetylated. Post-translationally, some lysine residues are oxidized to allysine by LOXL3, leading to disrupt STAT3 dimerization and inhibit STAT3 transcription activity. Oxidation of lysine residues to allysine on STAT3 preferentially takes place on lysine residues that are acetylated. As to expression, detected in lung, heart, oviduct, ovary, uterus and kidney (at protein level). Expressed in cardiomyocytes (at protein level). Detected in ovary, oviduct, and at lower levels in uterus and lung.

Its subcellular location is the cytoplasm. It localises to the nucleus. Its function is as follows. Signal transducer and transcription activator that mediates cellular responses to interleukins, KITLG/SCF, LEP and other growth factors. Once activated, recruits coactivators, such as NCOA1 or MED1, to the promoter region of the target gene. May mediate cellular responses to activated FGFR1, FGFR2, FGFR3 and FGFR4. Upon activation of IL6ST/gp130 signaling by interleukin-6 (IL6), binds to the IL6-responsive elements identified in the promoters of various acute-phase protein genes. Activated by IL31 through IL31RA. Acts as a regulator of inflammatory response by regulating differentiation of naive CD4(+) T-cells into T-helper Th17 or regulatory T-cells (Treg): acetylation promotes its transcription activity and cell differentiation while deacetylation and oxidation of lysine residues by LOXL3 inhibits differentiation. Involved in cell cycle regulation by inducing the expression of key genes for the progression from G1 to S phase, such as CCND1. Mediates the effects of LEP on melanocortin production, body energy homeostasis and lactation. May play an apoptotic role by transctivating BIRC5 expression under LEP activation. Cytoplasmic STAT3 represses macroautophagy by inhibiting EIF2AK2/PKR activity. Plays a crucial role in basal beta cell functions, such as regulation of insulin secretion. Following JAK/STAT signaling activation and as part of a complex with NFATC3 and NFATC4, binds to the alpha-beta E4 promoter region of CRYAB and activates transcription in cardiomyocytes. Plays an important role in host defense in methicillin-resistant S.aureus lung infection by regulating the expression of the antimicrobial lectin REG3G. This Rattus norvegicus (Rat) protein is Signal transducer and activator of transcription 3 (Stat3).